The following is an 87-amino-acid chain: Transcriptional regulator PINT87aa (87 aa).

In terms of assembly, interacts with PAF1 complex member PAF1. Interacts with transcription factor FOXM1. In terms of tissue distribution, expressed in brain, liver, kidney and stomach with lower levels in breast, intestine, thyroid and pancreas.

Its subcellular location is the nucleus. Enhances the binding of the PAF1 complex to target gene promoters and plays a role in negative regulation of transcription. May function as an anchor to keep the PAF1 complex on target gene promoters, sequentially pausing RNA polymerase II-induced mRNA elongation. Inhibits FOXM1-mediated transcription of PHB2. The polypeptide is Transcriptional regulator PINT87aa (Homo sapiens (Human)).